A 116-amino-acid chain; its full sequence is MAGFGLPNFGQLTEAFKKAKQIQQDAQKLQDELENMEIEGKSDDEMIKVWISGNQLPLKVEVQENIFNSNKEQIEKNILQAIKKAHELSTTTMKERMNDLTGGLNLNLPGFDNSDS.

This sequence belongs to the YbaB/EbfC family. In terms of assembly, homodimer.

It localises to the cytoplasm. The protein localises to the nucleoid. Functionally, binds to DNA and alters its conformation. May be involved in regulation of gene expression, nucleoid organization and DNA protection. This is Nucleoid-associated protein A9601_00191 from Prochlorococcus marinus (strain AS9601).